Consider the following 540-residue polypeptide: T-complex protein 1 subunit alpha (540 aa).

Belongs to the TCP-1 chaperonin family. As to quaternary structure, component of the T-complex protein 1 (TCP1) complex.

Its subcellular location is the cytoplasm. Its function is as follows. Molecular chaperone; assists the folding of proteins upon ATP hydrolysis. The protein is T-complex protein 1 subunit alpha (TCP1) of Encephalitozoon cuniculi (strain GB-M1) (Microsporidian parasite).